Consider the following 326-residue polypeptide: Dipeptide transport ATP-binding protein DppD (326 aa).

An ABC transporter domain is found at 5 to 255 (IRVEDLRAVY…PLHPYTRGLI (251 aa)). ATP contacts are provided by residues 44 to 49 (ASGKST), N61, and Q97. 4 residues coordinate [4Fe-4S] cluster: C285, C291, C298, and C316.

The protein belongs to the ABC transporter superfamily.

The protein localises to the cell membrane. It carries out the reaction a dipeptide(out) + ATP + H2O = a dipeptide(in) + ADP + phosphate + H(+). Its activity is regulated as follows. The C-terminal iron-sulfur cluster may stabilize the structure of the C-terminal loops and may function in the regulation of the transport process. Functionally, part of the ABC transporter Dpp involved in dipeptide transport. Responsible for energy coupling to the transport system. This Caldanaerobacter subterraneus subsp. tengcongensis (strain DSM 15242 / JCM 11007 / NBRC 100824 / MB4) (Thermoanaerobacter tengcongensis) protein is Dipeptide transport ATP-binding protein DppD.